Consider the following 633-residue polypeptide: NBPF family member NBPF3 (633 aa).

Positions R15–A52 are disordered. Positions L127–L186 form a coiled coil. 5 Olduvai domains span residues E221 to P313, E314 to P402, S405 to D460, R461 to P552, and N555 to H633. The span at E316 to G326 shows a compositional bias: basic and acidic residues. A disordered region spans residues E316–F370. The span at E335–D350 shows a compositional bias: acidic residues. Residues K463–P484 form a disordered region.

It belongs to the NBPF family. As to expression, expressed in testis and fetal heart, as well as in non small cell lung carcinoma and neuroblastoma cell line.

Its subcellular location is the cytoplasm. This is NBPF family member NBPF3 from Homo sapiens (Human).